The sequence spans 115 residues: DNA-directed RNA polymerase subunit Rpo4 (115 aa).

It belongs to the eukaryotic RPB4 RNA polymerase subunit family. As to quaternary structure, part of the RNA polymerase complex. Forms a stalk with Rpo7 that extends from the main structure.

It localises to the cytoplasm. The enzyme catalyses RNA(n) + a ribonucleoside 5'-triphosphate = RNA(n+1) + diphosphate. Functionally, DNA-dependent RNA polymerase (RNAP) catalyzes the transcription of DNA into RNA using the four ribonucleoside triphosphates as substrates. This subunit is less well bound than the others. The chain is DNA-directed RNA polymerase subunit Rpo4 from Methanocaldococcus jannaschii (strain ATCC 43067 / DSM 2661 / JAL-1 / JCM 10045 / NBRC 100440) (Methanococcus jannaschii).